We begin with the raw amino-acid sequence, 295 residues long: Ethanolamine ammonia-lyase small subunit (295 aa).

Residues Val-208 and Glu-229 each coordinate adenosylcob(III)alamin.

This sequence belongs to the EutC family. The basic unit is a heterodimer which dimerizes to form tetramers. The heterotetramers trimerize; 6 large subunits form a core ring with 6 small subunits projecting outwards. Adenosylcob(III)alamin serves as cofactor.

The protein resides in the bacterial microcompartment. It carries out the reaction ethanolamine = acetaldehyde + NH4(+). It functions in the pathway amine and polyamine degradation; ethanolamine degradation. In terms of biological role, catalyzes the deamination of various vicinal amino-alcohols to oxo compounds. Allows this organism to utilize ethanolamine as the sole source of nitrogen and carbon in the presence of external vitamin B12. The polypeptide is Ethanolamine ammonia-lyase small subunit (Fusobacterium nucleatum subsp. nucleatum (strain ATCC 25586 / DSM 15643 / BCRC 10681 / CIP 101130 / JCM 8532 / KCTC 2640 / LMG 13131 / VPI 4355)).